We begin with the raw amino-acid sequence, 131 residues long: Large ribosomal subunit protein bL19 (131 aa).

The segment at 107–131 is disordered; the sequence is GKSARIAERAERGSDKGKAAPAAAE. Basic and acidic residues predominate over residues 111 to 124; it reads RIAERAERGSDKGK.

This sequence belongs to the bacterial ribosomal protein bL19 family.

In terms of biological role, this protein is located at the 30S-50S ribosomal subunit interface and may play a role in the structure and function of the aminoacyl-tRNA binding site. This Methylobacterium sp. (strain 4-46) protein is Large ribosomal subunit protein bL19.